The chain runs to 137 residues: Large ribosomal subunit protein uL16 (137 aa).

Residues 1-20 (MLQPSNRKYRKDFKGRNRGV) form a disordered region. Over residues 7-17 (RKYRKDFKGRN) the composition is skewed to basic residues.

Belongs to the universal ribosomal protein uL16 family. Part of the 50S ribosomal subunit.

In terms of biological role, binds 23S rRNA and is also seen to make contacts with the A and possibly P site tRNAs. This Coxiella burnetii (strain CbuG_Q212) (Coxiella burnetii (strain Q212)) protein is Large ribosomal subunit protein uL16.